A 430-amino-acid polypeptide reads, in one-letter code: Tol-Pal system protein TolB (430 aa).

The N-terminal stretch at 1–21 is a signal peptide; the sequence is MKQALRVAFGFLILWASVLHA.

It belongs to the TolB family. As to quaternary structure, the Tol-Pal system is composed of five core proteins: the inner membrane proteins TolA, TolQ and TolR, the periplasmic protein TolB and the outer membrane protein Pal. They form a network linking the inner and outer membranes and the peptidoglycan layer.

The protein resides in the periplasm. Its function is as follows. Part of the Tol-Pal system, which plays a role in outer membrane invagination during cell division and is important for maintaining outer membrane integrity. TolB occupies a key intermediary position in the Tol-Pal system because it communicates directly with both membrane-embedded components, Pal in the outer membrane and TolA in the inner membrane. This Shigella boydii serotype 18 (strain CDC 3083-94 / BS512) protein is Tol-Pal system protein TolB.